The chain runs to 389 residues: Teichoic acid glycerol-phosphate transferase (389 aa).

The protein belongs to the CDP-glycerol glycerophosphotransferase family.

It localises to the cell membrane. It carries out the reaction 4-O-[(2R)-glycerylphospho]-N-acetyl-beta-D-mannosaminyl-(1-&gt;4)-N-acetyl-alpha-D-glucosaminyl di-trans,octa-cis-undecaprenyl diphosphate + CDP-glycerol = 4-O-[di(2R)-glycerylphospho]-N-acetyl-beta-D-mannosaminyl-(1-&gt;4)-N-acetyl-alpha-D-glucosaminyl di-trans,octa-cis-undecaprenyl diphosphate + CMP + H(+). Its pathway is cell wall biogenesis; poly(ribitol phosphate) teichoic acid biosynthesis. Its function is as follows. Catalyzes the addition of a second glycerol phosphate unit from CDP-glycerol to the prenolpyrophosphate-linked disaccharide, to complete the linkage unit. The polypeptide is Teichoic acid glycerol-phosphate transferase (tarF) (Staphylococcus aureus (strain NCTC 8325 / PS 47)).